Here is a 299-residue protein sequence, read N- to C-terminus: Transcription elongation factor A protein 2 (299 aa).

A TFIIS N-terminal domain is found at 5 to 82 (EEIARIARRL…KSWKKLLDVS (78 aa)). Lys-57 is covalently cross-linked (Glycyl lysine isopeptide (Lys-Gly) (interchain with G-Cter in ubiquitin)). Ser-59 and Ser-100 each carry phosphoserine. Residues 82 to 127 (SDGKSRNQGRGTPLPTSSSKDASRTTDLSCKKPDPPRTPSTPRITT) form a disordered region. Polar residues predominate over residues 87–101 (RNQGRGTPLPTSSSK). The span at 102 to 116 (DASRTTDLSCKKPDP) shows a compositional bias: basic and acidic residues. The TFIIS central domain occupies 138-254 (VRNKCREMLT…EHQMARTGGT (117 aa)). The segment at 257-297 (DLFTCNKCRKKNCTYTQVQTRSSDEPMTTYVVCNECGNRWK) adopts a TFIIS-type zinc-finger fold. 4 residues coordinate Zn(2+): Cys-261, Cys-264, Cys-289, and Cys-292.

This sequence belongs to the TFS-II family. As to quaternary structure, interacts with the basal transcription factor GTF2B. Interacts with REXO1. In terms of tissue distribution, testis and ovary specific. Specific to testicular germ cells.

It localises to the nucleus. Its function is as follows. Necessary for efficient RNA polymerase II transcription elongation past template-encoded arresting sites. The arresting sites in DNA have the property of trapping a certain fraction of elongating RNA polymerases that pass through, resulting in locked ternary complexes. Cleavage of the nascent transcript by S-II allows the resumption of elongation from the new 3'-terminus. This chain is Transcription elongation factor A protein 2 (Tcea2), found in Mus musculus (Mouse).